A 375-amino-acid chain; its full sequence is Actin (375 aa).

The protein belongs to the actin family.

The protein resides in the cytoplasm. It localises to the cytoskeleton. The enzyme catalyses ATP + H2O = ADP + phosphate + H(+). In terms of biological role, actins are highly conserved proteins that are involved in various types of cell motility and are ubiquitously expressed in all eukaryotic cells. This is Actin from Giardia intestinalis (Giardia lamblia).